The chain runs to 544 residues: Lysophosphatidylcholine acyltransferase 2 (544 aa).

The Cytoplasmic segment spans residues 1–58 (MNRCAEAAAVAATVPGSGVGDSGLRPPMVPRQASFFPPPVPNPFVQQTRISAARRLQM). Residues 59–79 (ILLGIILLPVRALLVGLVLLL) form a helical; Signal-anchor for type II membrane protein membrane-spanning segment. Topologically, residues 80–544 (AWPFAVISTV…EEGTSGKKVD (465 aa)) are lumenal. The HXXXXD motif motif lies at 146-151 (HSTFFD). Positions 220 to 223 (EGTC) match the EGTC motif motif. 2 consecutive EF-hand domains span residues 391–426 (PVSDVLRQLFALFDRNNDGSIDFREYVIGLAVLCNP) and 428–463 (NTEDIIQVAFKLFDVDEDGYITEEEFCTILQASLGV). D404, N406, D408, S410, E415, D441, D443, D445, Y447, and E452 together coordinate Ca(2+). A compositionally biased stretch (polar residues) spans 520 to 530 (TAPSVASNKVS). A disordered region spans residues 520-544 (TAPSVASNKVSPESHEEGTSGKKVD). Residues 531–544 (PESHEEGTSGKKVD) show a composition bias toward basic and acidic residues.

The protein belongs to the 1-acyl-sn-glycerol-3-phosphate acyltransferase family.

Its subcellular location is the endoplasmic reticulum membrane. The protein resides in the golgi apparatus membrane. It localises to the cell membrane. It is found in the lipid droplet. The catalysed reaction is a 1-acyl-sn-glycero-3-phosphocholine + an acyl-CoA = a 1,2-diacyl-sn-glycero-3-phosphocholine + CoA. It catalyses the reaction a 1-O-alkyl-sn-glycero-3-phosphocholine + acetyl-CoA = a 1-O-alkyl-2-acetyl-sn-glycero-3-phosphocholine + CoA. The enzyme catalyses a 1-acyl-sn-glycero-3-phosphate + an acyl-CoA = a 1,2-diacyl-sn-glycero-3-phosphate + CoA. It carries out the reaction a 1-O-(1Z-alkenyl)-sn-glycero-3-phosphocholine + an acyl-CoA = a 1-O-(1Z-alkenyl)-2-acyl-sn-glycero-3-phosphocholine + CoA. The catalysed reaction is 1-hexadecanoyl-sn-glycero-3-phosphate + (9Z)-octadecenoyl-CoA = 1-hexadecanoyl-2-(9Z-octadecenoyl)-sn-glycero-3-phosphate + CoA. It catalyses the reaction 1-(9Z-octadecenoyl)-sn-glycero-3-phosphate + (9Z)-octadecenoyl-CoA = 1,2-di-(9Z-octadecenoyl)-sn-glycero-3-phosphate + CoA. The enzyme catalyses 1-(9Z-octadecenoyl)-sn-glycero-3-phosphate + hexadecanoyl-CoA = 1-(9Z)-octadecenoyl-2-hexadecanoyl-sn-glycero-3-phosphate + CoA. It carries out the reaction 1-heptadecanoyl-sn-glycero-3-phosphate + (9Z)-octadecenoyl-CoA = 1-heptadecanoyl-2-(9Z)-octadecenoyl-sn-glycero-3-phosphate + CoA. The catalysed reaction is 1-octadecanoyl-sn-glycero-3-phosphate + (9Z)-octadecenoyl-CoA = 1-octadecanoyl-2-(9Z-octadecenoyl)-sn-glycero-3-phosphate + CoA. It catalyses the reaction heptadecanoyl-CoA + 1-(9Z-octadecenoyl)-sn-glycero-3-phosphate = 1-(9Z)-octadecenoyl-2-heptadecanoyl-sn-glycero-3-phosphate + CoA. The enzyme catalyses 1-(9Z-octadecenoyl)-sn-glycero-3-phosphate + (9Z,12Z)-octadecadienoyl-CoA = 1-(9Z)-octadecenoyl-2-(9Z,12Z)-octadecadienoyl-sn-glycero-3-phosphate + CoA. It carries out the reaction 1-(9Z-octadecenoyl)-sn-glycero-3-phosphate + tetradecanoyl-CoA = 1-(9Z)-octadecenoyl-2-tetradecanoyl-sn-glycero-3-phosphate + CoA. The catalysed reaction is pentadecanoyl-CoA + 1-(9Z-octadecenoyl)-sn-glycero-3-phosphate = 1-(9Z)-octadecenoyl-2-pentadecanoyl-sn-glycero-3-phosphate + CoA. It catalyses the reaction nonadecanoyl-CoA + 1-(9Z-octadecenoyl)-sn-glycero-3-phosphate = 1-(9Z)-octadecenoyl-2-nonadecanoyl-sn-glycero-3-phosphate + CoA. The enzyme catalyses 1-hexadecanoyl-sn-glycero-3-phosphocholine + (9Z)-octadecenoyl-CoA = 1-hexadecanoyl-2-(9Z-octadecenoyl)-sn-glycero-3-phosphocholine + CoA. It carries out the reaction 1-O-hexadecyl-sn-glycero-3-phosphocholine + acetyl-CoA = 1-O-hexadecyl-2-acetyl-sn-glycero-3-phosphocholine + CoA. The catalysed reaction is 1-O-octadecyl-sn-glycero-3-phosphocholine + acetyl-CoA = 1-O-octadecyl-2-acetyl-sn-glycero-3-phosphocholine + CoA. It catalyses the reaction 1-hexadecanoyl-sn-glycero-3-phosphocholine + acetyl-CoA = 1-hexadecanoyl-2-acetyl-sn-glycero-3-phosphocholine + CoA. The enzyme catalyses 1-octadecanoyl-sn-glycero-3-phosphocholine + acetyl-CoA = 1-octadecanoyl-2-acetyl-sn-glycero-3-phosphocholine + CoA. It carries out the reaction a 1-O-(1Z-alkenyl)-sn-glycero-3-phosphocholine + acetyl-CoA = 1-O-(1Z)-alkenyl-2-acetyl-sn-glycero-3-phosphocholine + CoA. The catalysed reaction is 1-O-octadecyl-sn-glycero-3-phosphocholine + (5Z,8Z,11Z,14Z)-eicosatetraenoyl-CoA = 1-O-octadecyl-2-(5Z,8Z,11Z,14Z)-eicosatetraenoyl-sn-glycero-3-phosphocholine + CoA. It functions in the pathway lipid metabolism; phospholipid metabolism. Functionally, exhibits both acyltransferase and acetyltransferase activities. Activity is calcium-dependent. Catalyzes the conversion of lysophosphatidylcholine (1-acyl-sn-glycero-3-phosphocholine or LPC) into phosphatidylcholine (1,2-diacyl-sn-glycero-3-phosphocholine or PC). Catalyzes the conversion 1-acyl-sn-glycerol-3-phosphate (lysophosphatidic acid or LPA) into 1,2-diacyl-sn-glycerol-3-phosphate (phosphatidic acid or PA) by incorporating an acyl moiety at the sn-2 position of the glycerol backbone. Involved in platelet-activating factor (PAF) biosynthesis by catalyzing the conversion of the PAF precursor, 1-O-alkyl-sn-glycero-3-phosphocholine (lyso-PAF) into 1-O-alkyl-2-acetyl-sn-glycero-3-phosphocholine (PAF). Also converts lyso-PAF to 1-O-alkyl-2-acyl-sn-glycero-3-phosphocholine (PC), a major component of cell membranes and a PAF precursor. Under resting conditions, acyltransferase activity is preferred. Upon acute inflammatory stimulus, acetyltransferase activity is enhanced and PAF synthesis increases. Involved in the regulation of lipid droplet number and size. The polypeptide is Lysophosphatidylcholine acyltransferase 2 (Lpcat2) (Rattus norvegicus (Rat)).